Reading from the N-terminus, the 305-residue chain is Elongation factor Ts (305 aa).

The interval 81-84 (TDFV) is involved in Mg(2+) ion dislocation from EF-Tu.

This sequence belongs to the EF-Ts family.

The protein resides in the cytoplasm. Associates with the EF-Tu.GDP complex and induces the exchange of GDP to GTP. It remains bound to the aminoacyl-tRNA.EF-Tu.GTP complex up to the GTP hydrolysis stage on the ribosome. In Nitratiruptor sp. (strain SB155-2), this protein is Elongation factor Ts.